Here is a 218-residue protein sequence, read N- to C-terminus: MPLKDTVLHIRHLGRQDYESVWHAMQEYTDNRDETSRDELWIVEHPPVFTQGQAGKSEHILNPGDIPVIQVDRGGQVTYHGPGQLVAYPLLDIKRLKIGVRQLVTDIEQSIVKMLALYGIEAYPKADAPGVYVEERKIASLGLRIRKGCSFHGLALNVDMDMSPFQRINPCGYAGLEMAQCKPLKGPQSVEEAGEKLIQTFSQELGYQHLEHHQGLTD.

The BPL/LPL catalytic domain occupies 34–209 (ETSRDELWIV…TFSQELGYQH (176 aa)). Substrate contacts are provided by residues 73–80 (RGGQVTYH), 140–142 (SLG), and 153–155 (GLA). Cysteine 171 (acyl-thioester intermediate) is an active-site residue.

It belongs to the LipB family.

The protein resides in the cytoplasm. It carries out the reaction octanoyl-[ACP] + L-lysyl-[protein] = N(6)-octanoyl-L-lysyl-[protein] + holo-[ACP] + H(+). The protein operates within protein modification; protein lipoylation via endogenous pathway; protein N(6)-(lipoyl)lysine from octanoyl-[acyl-carrier-protein]: step 1/2. In terms of biological role, catalyzes the transfer of endogenously produced octanoic acid from octanoyl-acyl-carrier-protein onto the lipoyl domains of lipoate-dependent enzymes. Lipoyl-ACP can also act as a substrate although octanoyl-ACP is likely to be the physiological substrate. The polypeptide is Octanoyltransferase (Shewanella loihica (strain ATCC BAA-1088 / PV-4)).